Consider the following 81-residue polypeptide: Weak neurotoxin OH-72 (81 aa).

The signal sequence occupies residues 1-16 (LTLVVVTIVCLDLGYT). Disulfide bonds link Cys19-Cys40, Cys22-Cys27, Cys33-Cys58, Cys62-Cys73, and Cys74-Cys79.

This sequence belongs to the three-finger toxin family. Ancestral subfamily. Orphan group II sub-subfamily. As to expression, expressed by the venom gland.

It is found in the secreted. Binds with low affinity to muscular (alpha-1-beta-1-delta-epsilon/CHRNA1-CHRNB1-CHRND-CHRNE) and very low affinity to neuronal (alpha-7/CHRNA7) nicotinic acetylcholine receptor (nAChR). In Ophiophagus hannah (King cobra), this protein is Weak neurotoxin OH-72.